Here is a 545-residue protein sequence, read N- to C-terminus: Glucose-6-phosphate isomerase (545 aa).

Glu-345 functions as the Proton donor in the catalytic mechanism. Active-site residues include His-376 and Lys-514.

The protein belongs to the GPI family.

The protein resides in the cytoplasm. It catalyses the reaction alpha-D-glucose 6-phosphate = beta-D-fructose 6-phosphate. Its pathway is carbohydrate biosynthesis; gluconeogenesis. The protein operates within carbohydrate degradation; glycolysis; D-glyceraldehyde 3-phosphate and glycerone phosphate from D-glucose: step 2/4. Functionally, catalyzes the reversible isomerization of glucose-6-phosphate to fructose-6-phosphate. The sequence is that of Glucose-6-phosphate isomerase from Leptothrix cholodnii (strain ATCC 51168 / LMG 8142 / SP-6) (Leptothrix discophora (strain SP-6)).